Reading from the N-terminus, the 306-residue chain is GTPase IMAP family member 1 (306 aa).

Residues 1–21 (MGGRKMATDEENVYGLEENAQ) are disordered. Residues 1 to 272 (MGGRKMATDE…RLWKWLKSPR (272 aa)) lie on the Cytoplasmic side of the membrane. The region spanning 25 to 229 (ESTRRLILVG…YSNEVYELAQ (205 aa)) is the AIG1-type G domain. Residues 34–41 (GRTGAGKS) are G1. Residues 34–42 (GRTGAGKSA) and S55 each bind GTP. The interval 61–65 (SVTRA) is G2. Residues 82–85 (DTPD) form a G3 region. Residues 152 to 155 (TRKE) are G4. GTP is bound by residues 153 to 155 (RKE) and N190. The interval 189–191 (DNR) is G5. A helical; Anchor for type IV membrane protein membrane pass occupies residues 273–292 (SWRLGLALLLGGALLFWVLL). Residues 293 to 306 (HRRWSEAVAEVGPD) lie on the Lumenal side of the membrane.

Belongs to the TRAFAC class TrmE-Era-EngA-EngB-Septin-like GTPase superfamily. AIG1/Toc34/Toc159-like paraseptin GTPase family. IAN subfamily. As to expression, predominantly expressed in the spleen and to a lesser extent in the lymph nodes. Detected in T-cells.

It localises to the endoplasmic reticulum membrane. The protein resides in the golgi apparatus membrane. Functionally, may regulate lymphocyte survival. Required for normal levels of mature T-lymphocytes and mature B-cells. This chain is GTPase IMAP family member 1 (GIMAP1), found in Homo sapiens (Human).